Here is a 419-residue protein sequence, read N- to C-terminus: UDP-N-acetylglucosamine 1-carboxyvinyltransferase (419 aa).

Residue 22–23 (KN) participates in phosphoenolpyruvate binding. Residue Arg-92 participates in UDP-N-acetyl-alpha-D-glucosamine binding. Residue Cys-116 is the Proton donor of the active site. Residue Cys-116 is modified to 2-(S-cysteinyl)pyruvic acid O-phosphothioketal. 2 residues coordinate UDP-N-acetyl-alpha-D-glucosamine: Asp-307 and Val-329.

Belongs to the EPSP synthase family. MurA subfamily.

The protein localises to the cytoplasm. It carries out the reaction phosphoenolpyruvate + UDP-N-acetyl-alpha-D-glucosamine = UDP-N-acetyl-3-O-(1-carboxyvinyl)-alpha-D-glucosamine + phosphate. Its pathway is cell wall biogenesis; peptidoglycan biosynthesis. Cell wall formation. Adds enolpyruvyl to UDP-N-acetylglucosamine. In Pseudothermotoga lettingae (strain ATCC BAA-301 / DSM 14385 / NBRC 107922 / TMO) (Thermotoga lettingae), this protein is UDP-N-acetylglucosamine 1-carboxyvinyltransferase.